The chain runs to 481 residues: MFS transporter eqxG (481 aa).

Residues 1 to 13 are compositionally biased toward low complexity; that stretch reads MATTDPAIAAPDD. The disordered stretch occupies residues 1 to 58; the sequence is MATTDPAIAAPDDSQLEAGRENIRANVGDALEKPSSSTGTMVDEPTDPNVVDWDGPHD. An N-linked (GlcNAc...) asparagine glycan is attached at Asn-64. A helical membrane pass occupies residues 72-92; sequence LHLVIVSLFTLAANLAATMFA. N-linked (GlcNAc...) asparagine glycosylation is present at Asn-106. 10 consecutive transmembrane segments (helical) span residues 111–131, 146–166, 169–189, 201–221, 276–296, 315–335, 353–373, 380–400, 403–423, and 439–459; these read AMTVSLYVLGFALGPLLLAPL, FVYVVFTIGCAFSTNVAMFLV, IICGCAASGPMSIGGGTVADL, LFTVGPLLGPSGLIGVATVIF, PIVLLISLYTGILFGLIFLLF, GLAYLGLGIGMILGLVLFSVL, LILMKWLGPITPLGLFIYGWT, WIVPIIGTFVVGFGSLFVVIP, IYLVDAFGAEAAASAMAANLL, and LYVSLGLGWGNSVLGFICLLF.

It belongs to the major facilitator superfamily.

Its subcellular location is the cell membrane. In terms of biological role, efflux pump that might be required for efficient secretion of equisetin or other secondary metabolies produced by the equisetin gene cluster. This chain is MFS transporter eqxG, found in Fusarium heterosporum.